Consider the following 379-residue polypeptide: Carbamoyl phosphate synthase small chain (379 aa).

The CPSase stretch occupies residues Met-1 to Asn-184. L-glutamine contacts are provided by Ser-44, Gly-240, and Gly-242. The Glutamine amidotransferase type-1 domain occupies Thr-188–Arg-378. The active-site Nucleophile is Cys-268. Residues Leu-269, Gln-272, Asn-310, and Tyr-313 each coordinate L-glutamine. Catalysis depends on residues His-351 and Glu-353.

It belongs to the CarA family. Composed of two chains; the small (or glutamine) chain promotes the hydrolysis of glutamine to ammonia, which is used by the large (or ammonia) chain to synthesize carbamoyl phosphate. Tetramer of heterodimers (alpha,beta)4.

It catalyses the reaction hydrogencarbonate + L-glutamine + 2 ATP + H2O = carbamoyl phosphate + L-glutamate + 2 ADP + phosphate + 2 H(+). The enzyme catalyses L-glutamine + H2O = L-glutamate + NH4(+). The protein operates within amino-acid biosynthesis; L-arginine biosynthesis; carbamoyl phosphate from bicarbonate: step 1/1. It functions in the pathway pyrimidine metabolism; UMP biosynthesis via de novo pathway; (S)-dihydroorotate from bicarbonate: step 1/3. Its function is as follows. Small subunit of the glutamine-dependent carbamoyl phosphate synthetase (CPSase). CPSase catalyzes the formation of carbamoyl phosphate from the ammonia moiety of glutamine, carbonate, and phosphate donated by ATP, constituting the first step of 2 biosynthetic pathways, one leading to arginine and/or urea and the other to pyrimidine nucleotides. The small subunit (glutamine amidotransferase) binds and cleaves glutamine to supply the large subunit with the substrate ammonia. This chain is Carbamoyl phosphate synthase small chain, found in Helicobacter acinonychis (strain Sheeba).